An 82-amino-acid chain; its full sequence is Penaeidin-3d (82 aa).

A signal peptide spans 1 to 19 (MRLVVCLVFLASFALVCQG). Glutamine 20 carries the post-translational modification Pyrrolidone carboxylic acid. Disulfide bonds link cysteine 51–cysteine 66, cysteine 55–cysteine 73, and cysteine 67–cysteine 74. Position 81 is a serine amide (serine 81).

This sequence belongs to the penaeidin family.

The protein localises to the cytoplasmic granule. Functionally, antibacterial and antifungal activity. Presents chitin-binding activity. The protein is Penaeidin-3d of Penaeus vannamei (Whiteleg shrimp).